Reading from the N-terminus, the 492-residue chain is MQEAPAALPTEPGPSPVPAFLGKLWALVGDPGTDHLIRWSPSGTSFLVSDQSRFAKEVLPQYFKHSNMASFVRQLNMYGFRKVVSIEQGGLLRPERDHVEFQHPSFVRGREQLLERVRRKVPALRGDDSRWRPEDLSRLLGEVQALRGVQESTEARLQELRQQNEILWREVVTLRQSHSQQHRVIGKLIQCLFGPLQTGPSSTGAKRKLSLMLDEGSACSASAKFNACPVSGALLQDPYFIQSPLPETTLGLSPHRARGPIISDIPEDSPSPEGHRLSPSGGCRRVKGLALLKEEPASPGGDGEAGLALAPNECDFCVTAPPPLPVAVVQAILEGKGSYSPEGPRSVQQPEPRGPREVPDRGTLGLDRGNRSPESLLPPMLLRPAPETLEPVAPVDVLGPSLHGREWTLMDLDMELSLMQPLAPETDEAELTVKELNSSGVGKDHTLGTPLMLDVQADLEGAALSVPGALTLYNVTESNASYLDPGASPSSP.

A DNA-binding region spans residues 17–122; sequence VPAFLGKLWA…LLERVRRKVP (106 aa). The tract at residues 129 to 203 is hydrophobic repeat HR-A/B; the sequence is SRWRPEDLSR…GPLQTGPSST (75 aa). Residues 245 to 322 are interactions with DUSP26, MAPK1 and MAPK2; that stretch reads LPETTLGLSP…ECDFCVTAPP (78 aa). Positions 263–282 are disordered; sequence SDIPEDSPSPEGHRLSPSGG. Residue Lys-293 forms a Glycyl lysine isopeptide (Lys-Gly) (interchain with G-Cter in SUMO) linkage. Ser-298 carries the phosphoserine modification. The tract at residues 337 to 378 is disordered; that stretch reads GSYSPEGPRSVQQPEPRGPREVPDRGTLGLDRGNRSPESLLP. Residues 364 to 389 form a hydrophobic repeat HR-C region; the sequence is LGLDRGNRSPESLLPPMLLRPAPETL.

This sequence belongs to the HSF family. As to quaternary structure, homotrimer. Exhibits constitutive DNA binding and forms trimers even in the absence of stress. Interacts with ALKBH4, DUSP26, MAPK1, MAPK2, MAPK8 and MAP kinase p38. In terms of processing, phosphorylated mainly on serine residues. Phosphorylation on Ser-298 promotes sumoylation on Lys-293. Isoform HSF4B is constitutively sumoylated. Sumoylation represses the transcriptional activity and is promoted by phosphorylation on Ser-298. HSFA is not sumoylated. Preferentially expressed in brain and lung. Also found in the eye. Slightly detected in liver and skeletal muscle. Isoform B is the major species in various tissues.

It is found in the nucleus. Its function is as follows. Heat-shock transcription factor that specifically binds heat shock promoter elements (HSE). Required for denucleation and organelle rupture and degradation that occur during eye lens terminal differentiation, when fiber cells that compose the lens degrade all membrane-bound organelles in order to provide lens with transparency to allow the passage of light. In this process, may regulate denucleation of lens fiber cells in part by activating DNASE2B transcription. May be involved in DNA repair through the transcriptional regulation of RAD51. May up-regulate p53/TP53 protein in eye lens fiber cells, possibly through protein stabilization. In the eye lens, controls the expression of alpha-crystallin B chain/CRYAB and consequently may be involved in the regulation of lysosomal acidification. Transcriptional repressor. In terms of biological role, transcriptional activator. The chain is Heat shock factor protein 4 (Hsf4) from Mus musculus (Mouse).